The following is a 125-amino-acid chain: MADLAKLVDDLSSLTVLEAADLAKMLEEKWGVSAAAAVAVAAGPAAGGAAAAVEEQTEFTVVLASAGDKKIEVIKEVRAITGLGLKEAKDLVEGAPKPVKEGVAKDEAEKLKAQLEKAGAKIELK.

This sequence belongs to the bacterial ribosomal protein bL12 family. In terms of assembly, homodimer. Part of the ribosomal stalk of the 50S ribosomal subunit. Forms a multimeric L10(L12)X complex, where L10 forms an elongated spine to which 2 to 4 L12 dimers bind in a sequential fashion. Binds GTP-bound translation factors.

Its function is as follows. Forms part of the ribosomal stalk which helps the ribosome interact with GTP-bound translation factors. Is thus essential for accurate translation. The chain is Large ribosomal subunit protein bL12 from Methylobacterium radiotolerans (strain ATCC 27329 / DSM 1819 / JCM 2831 / NBRC 15690 / NCIMB 10815 / 0-1).